The sequence spans 360 residues: MEKEKKGAKHELDLSSILQFVAPGTPLRAGMENVLRANTGGLIVVGYNDKVKEVVDGGFHINTAFSPAHLYELAKMDGAIILSDSGQKILYANTQLMPDATISSSETGMRHRTAERVAKQTGCLVIAISERRNVITLYQENMKYTLKDIGFILTKANQAIQTLEKYKTILDKTINALNALEFEELVTFSDVLSVMHRYEMVLRIKNEINMYIKELGTEGHLIKLQVIELITDMEEEAALFIKDYVKEKIKDPFVLLKELQDMSSYDLLDDSIVYKLLGYPASTNLDDYVLPRGYRLLNKIPRLPMPIVENVVEAFGVLPRIIEASAEELDEVEGIGEVRAQKIKKGLKRLQEKHYLDRQL.

The region spanning 11–149 (ELDLSSILQF…ENMKYTLKDI (139 aa)) is the DAC domain. ATP is bound by residues Gly78, Leu96, and 109–113 (MRHRT).

This sequence belongs to the DisA family. In terms of assembly, homooligomer. Interacts with RadA. It depends on Mg(2+) as a cofactor.

Its subcellular location is the cytoplasm. The enzyme catalyses 2 ATP = 3',3'-c-di-AMP + 2 diphosphate. With respect to regulation, diadenylate cyclase (DAC) activity is inhibited 2-fold by Holliday junction (HJ) DNA, further addition of RecG inhibits DAC activity 11-fold; RecG may relocate DisA from the HJ. DAC is inhibited by the interaction with RadA. Diadenylate cyclase activity is not affected by ssDNA or dsDNA, but three- and four-way junctions strongly inhibit the activity of DisA, suggesting the enzyme is regulated by branched nucleic acids. Functionally, participates in a DNA-damage check-point that is active prior to asymmetric division when DNA is damaged. Forms globular foci that rapidly scan along the chromosomes during sporulation, searching for lesions. Its ability to scan through the chromosome rapidly is due to its non-specific DNA-binding. When a lesion is present, DisA pauses at the lesion site. This triggers a cellular response that culminates in a temporary block in sporulation initiation. It is required, at least partially, to inhibit the activity of the transcription factor spo0A, which controls, among others, early sporulation genes. In B.subtilis c-di-AMP is a second messenger that mediates growth, DNA repair and cell wall homeostasis; it is toxic when present in excess. Limits the replication fork reggression activity of RecG; DisA inhibits the ATPase activity of RecG. By limiting RecG-mediated fork regression, DisA provides time for removal of potentially lethal DNA lesions. In terms of biological role, one of 3 paralogous diadenylate cyclases (DAC) in this bacteria. Has diadenylate cyclase activity, catalyzing the condensation of 2 ATP molecules into cyclic di-AMP (c-di-AMP). c-di-AMP acts as a signaling molecule that couples DNA integrity with progression of sporulation. The rise in c-di-AMP level generated by DisA while scanning the chromosome operates as a positive signal that advances sporulation; upon encountering a lesion, the DisA focus arrests at the damaged site and halts c-di-AMP synthesis. Does not convert GTP to c-di-GMP. In Bacillus subtilis (strain 168), this protein is DNA integrity scanning protein DisA.